Reading from the N-terminus, the 262-residue chain is Thioredoxin-like protein HCF164, chloroplastic (262 aa).

The N-terminal 54 residues, 1-54, are a transit peptide targeting the chloroplast; the sequence is MAVVASRCTGLLLPDLGASLAGFRRRRSTPASSLSFRPRRARRRLGSLSCIAPP. The disordered stretch occupies residues 47 to 90; sequence SLSCIAPPDSAEPQTDEPAAKDDSTEDKAEASSASQDAGNPTFP. Residues 64–76 show a composition bias toward basic and acidic residues; the sequence is PAAKDDSTEDKAE. Positions 78–89 are enriched in polar residues; sequence SSASQDAGNPTF. The region spanning 78 to 230 is the Thioredoxin domain; that stretch reads SSASQDAGNP…FLDNVVALAS (153 aa). Active-site nucleophile residues include Cys151 and Cys154. Cys151 and Cys154 are disulfide-bonded.

The protein belongs to the thioredoxin family.

The protein localises to the plastid. The protein resides in the chloroplast. Probable thiol-disulfide oxidoreductase that may participate in various redox reactions in the chloroplast. The chain is Thioredoxin-like protein HCF164, chloroplastic from Oryza sativa subsp. japonica (Rice).